We begin with the raw amino-acid sequence, 345 residues long: Phosphoribosylformylglycinamidine cyclo-ligase (345 aa).

This sequence belongs to the AIR synthase family.

Its subcellular location is the cytoplasm. It carries out the reaction 2-formamido-N(1)-(5-O-phospho-beta-D-ribosyl)acetamidine + ATP = 5-amino-1-(5-phospho-beta-D-ribosyl)imidazole + ADP + phosphate + H(+). Its pathway is purine metabolism; IMP biosynthesis via de novo pathway; 5-amino-1-(5-phospho-D-ribosyl)imidazole from N(2)-formyl-N(1)-(5-phospho-D-ribosyl)glycinamide: step 2/2. This is Phosphoribosylformylglycinamidine cyclo-ligase from Salmonella typhimurium (strain LT2 / SGSC1412 / ATCC 700720).